Here is a 675-residue protein sequence, read N- to C-terminus: Gastrula zinc finger protein xFG20-1 (675 aa).

10 C2H2-type zinc fingers span residues 62–84, 90–112, 118–140, 146–168, 174–196, 202–224, 257–279, 286–308, 344–366, and 373–395; these read FTCT…IRAH, FSCM…YSVH, FSCT…LRVH, YSCE…QRTH, FSCT…LKTH, HLCA…QKIH, FPCT…QSTH, and LPCT…QSTH. A disordered region spans residues 302-325; that stretch reads RTHQSTHTEGQKSLPSTESGGTFS. Residues 304–325 are compositionally biased toward polar residues; that stretch reads HQSTHTEGQKSLPSTESGGTFS. Polar residues predominate over residues 390–407; that stretch reads THQSTHTSPSTEFGVQTT. Residues 390-423 are disordered; it reads THQSTHTSPSTEFGVQTTEDNHQSPSKDHTGEKP. The span at 408 to 421 shows a compositional bias: basic and acidic residues; sequence EDNHQSPSKDHTGE. 8 consecutive C2H2-type zinc fingers follow at residues 424–446, 452–474, 480–501, 507–529, 535–557, 563–585, 591–613, and 619–642; these read FSCS…LVVH, YHCI…QRTH, FSCN…YRVH, YPCT…YKVH, YPCQ…LRTH, FSCT…LTTH, FSCT…YKMH, and FTCT…TTVH.

Belongs to the krueppel C2H2-type zinc-finger protein family.

The protein resides in the nucleus. May be involved in transcriptional regulation. The chain is Gastrula zinc finger protein xFG20-1 from Xenopus laevis (African clawed frog).